The primary structure comprises 254 residues: Phosphoribosylaminoimidazole-succinocarboxamide synthase (254 aa).

The protein belongs to the SAICAR synthetase family.

The catalysed reaction is 5-amino-1-(5-phospho-D-ribosyl)imidazole-4-carboxylate + L-aspartate + ATP = (2S)-2-[5-amino-1-(5-phospho-beta-D-ribosyl)imidazole-4-carboxamido]succinate + ADP + phosphate + 2 H(+). It functions in the pathway purine metabolism; IMP biosynthesis via de novo pathway; 5-amino-1-(5-phospho-D-ribosyl)imidazole-4-carboxamide from 5-amino-1-(5-phospho-D-ribosyl)imidazole-4-carboxylate: step 1/2. The chain is Phosphoribosylaminoimidazole-succinocarboxamide synthase from Acidiphilium cryptum (strain JF-5).